The following is a 376-amino-acid chain: Putative dihydroorotase (376 aa).

Zn(2+) is bound by residues histidine 35 and histidine 37. Substrate contacts are provided by residues 37–39 (HVR) and asparagine 66. Residues aspartate 114, histidine 138, and histidine 187 each contribute to the Zn(2+) site. Asparagine 230 lines the substrate pocket. Aspartate 257 is a binding site for Zn(2+). Aspartate 257 is a catalytic residue. Substrate contacts are provided by residues histidine 261 and 273–274 (YG).

This sequence belongs to the metallo-dependent hydrolases superfamily. DHOase family. Class I DHOase subfamily. The cofactor is Zn(2+).

It carries out the reaction (S)-dihydroorotate + H2O = N-carbamoyl-L-aspartate + H(+). It participates in pyrimidine metabolism; UMP biosynthesis via de novo pathway; (S)-dihydroorotate from bicarbonate: step 3/3. Functionally, catalyzes the reversible cyclization of carbamoyl aspartate to dihydroorotate. The sequence is that of Putative dihydroorotase (pyrC) from Thermotoga maritima (strain ATCC 43589 / DSM 3109 / JCM 10099 / NBRC 100826 / MSB8).